A 348-amino-acid chain; its full sequence is Phospho-2-dehydro-3-deoxyheptonate aldolase, Trp-sensitive (348 aa).

Belongs to the class-I DAHP synthase family.

The enzyme catalyses D-erythrose 4-phosphate + phosphoenolpyruvate + H2O = 7-phospho-2-dehydro-3-deoxy-D-arabino-heptonate + phosphate. Its pathway is metabolic intermediate biosynthesis; chorismate biosynthesis; chorismate from D-erythrose 4-phosphate and phosphoenolpyruvate: step 1/7. Stereospecific condensation of phosphoenolpyruvate (PEP) and D-erythrose-4-phosphate (E4P) giving rise to 3-deoxy-D-arabino-heptulosonate-7-phosphate (DAHP). In Buchnera aphidicola subsp. Acyrthosiphon pisum (strain APS) (Acyrthosiphon pisum symbiotic bacterium), this protein is Phospho-2-dehydro-3-deoxyheptonate aldolase, Trp-sensitive (aroH).